A 610-amino-acid chain; its full sequence is Elongation factor 4 (610 aa).

The region spanning Q11–T193 is the tr-type G domain. Residues D23 to T28 and N140 to D143 contribute to the GTP site.

It belongs to the TRAFAC class translation factor GTPase superfamily. Classic translation factor GTPase family. LepA subfamily.

The protein localises to the cell membrane. The catalysed reaction is GTP + H2O = GDP + phosphate + H(+). Its function is as follows. Required for accurate and efficient protein synthesis under certain stress conditions. May act as a fidelity factor of the translation reaction, by catalyzing a one-codon backward translocation of tRNAs on improperly translocated ribosomes. Back-translocation proceeds from a post-translocation (POST) complex to a pre-translocation (PRE) complex, thus giving elongation factor G a second chance to translocate the tRNAs correctly. Binds to ribosomes in a GTP-dependent manner. In Limosilactobacillus fermentum (strain NBRC 3956 / LMG 18251) (Lactobacillus fermentum), this protein is Elongation factor 4.